A 485-amino-acid chain; its full sequence is GTPase Der (485 aa).

2 consecutive EngA-type G domains span residues 3–167 (PTIA…PEPE) and 176–349 (PVFA…NAAM). Residues 9 to 16 (GRPNVGKS), 56 to 60 (DTGGF), 119 to 122 (NKGE), 182 to 189 (GRPNVGKS), 229 to 233 (DTAGV), and 294 to 297 (NKWD) contribute to the GTP site. The 85-residue stretch at 350 to 434 (IKMPTPKITR…PLRIQYNVSE (85 aa)) folds into the KH-like domain. Residues 435-485 (NPYENADDKPKKKPLRRVSLSNRIEKREGRKEEKNRFKKKTKVSVKKQFSK) are disordered. Positions 457–469 (RIEKREGRKEEKN) are enriched in basic and acidic residues. The segment covering 470 to 485 (RFKKKTKVSVKKQFSK) has biased composition (basic residues).

The protein belongs to the TRAFAC class TrmE-Era-EngA-EngB-Septin-like GTPase superfamily. EngA (Der) GTPase family. As to quaternary structure, associates with the 50S ribosomal subunit.

Its function is as follows. GTPase that plays an essential role in the late steps of ribosome biogenesis. The chain is GTPase Der from Neisseria meningitidis serogroup A / serotype 4A (strain DSM 15465 / Z2491).